A 444-amino-acid chain; its full sequence is MEPKERELAFGTDGVRGVANRGLLPEDALRLGLAAARRFGGTVVIGRDTRLSGGMLSSALAAGVASGGARALDLGVLPTPGAAALAARLGASAAGVVSASHNPYPDNGIKFLSGEGRKLPQRTERELERLARDPFPERPVAGGVGRVEALEDAPEMYAGAVLGALRPEVPGLRVLLDCANGAACAVAPRIFRELGVQLTVVGDAPDGTNINEGCGSTHIERLEVAGHDVAFAFDGDADRVLALDERGRVVDGDRIIAILARDLKERGRLGGGAVVTVMSNLGLLKALESLGIPCEVTPVGDRHVAEAMLRVGASVGGEQSGHIIVAEHATTGDGIVTALALLDVMARTGRSLSELAGVMEVYPQVLVNVRVERDGGAGRVAASGTVERAVEDARRELGERGRIVLRPSGTEPVVRVMVEHEDEEVCRRVCERVAGVVSREGGGG.

The Phosphoserine intermediate role is filled by S100. The Mg(2+) site is built by S100, D234, D236, and D238. Phosphoserine is present on S100.

It belongs to the phosphohexose mutase family. The cofactor is Mg(2+). Activated by phosphorylation.

It catalyses the reaction alpha-D-glucosamine 1-phosphate = D-glucosamine 6-phosphate. Its function is as follows. Catalyzes the conversion of glucosamine-6-phosphate to glucosamine-1-phosphate. This is Phosphoglucosamine mutase from Rubrobacter xylanophilus (strain DSM 9941 / JCM 11954 / NBRC 16129 / PRD-1).